A 248-amino-acid polypeptide reads, in one-letter code: 1-(5-phosphoribosyl)-5-[(5-phosphoribosylamino)methylideneamino] imidazole-4-carboxamide isomerase (248 aa).

The Proton acceptor role is filled by Asp-7. The Proton donor role is filled by Asp-129.

It belongs to the HisA/HisF family.

The protein localises to the cytoplasm. It carries out the reaction 1-(5-phospho-beta-D-ribosyl)-5-[(5-phospho-beta-D-ribosylamino)methylideneamino]imidazole-4-carboxamide = 5-[(5-phospho-1-deoxy-D-ribulos-1-ylimino)methylamino]-1-(5-phospho-beta-D-ribosyl)imidazole-4-carboxamide. The protein operates within amino-acid biosynthesis; L-histidine biosynthesis; L-histidine from 5-phospho-alpha-D-ribose 1-diphosphate: step 4/9. The sequence is that of 1-(5-phosphoribosyl)-5-[(5-phosphoribosylamino)methylideneamino] imidazole-4-carboxamide isomerase from Aeromonas salmonicida (strain A449).